A 288-amino-acid chain; its full sequence is UTP--glucose-1-phosphate uridylyltransferase (288 aa).

Belongs to the UDPGP type 2 family.

It carries out the reaction alpha-D-glucose 1-phosphate + UTP + H(+) = UDP-alpha-D-glucose + diphosphate. It participates in glycolipid metabolism; diglucosyl-diacylglycerol biosynthesis. Its function is as follows. Catalyzes the formation of UDP-glucose from glucose-1-phosphate and UTP. This is an intermediate step in the biosynthesis of diglucosyl-diacylglycerol (Glc2-DAG), i.e. a glycolipid found in the membrane, which is also used as a membrane anchor for lipoteichoic acid (LTA). This is UTP--glucose-1-phosphate uridylyltransferase (gtaB) from Staphylococcus haemolyticus (strain JCSC1435).